We begin with the raw amino-acid sequence, 276 residues long: Light-independent protochlorophyllide reductase iron-sulfur ATP-binding protein (276 aa).

Residues 12–17 (GIGKST) and K41 contribute to the ATP site. Residue S16 participates in Mg(2+) binding. [4Fe-4S] cluster contacts are provided by C97 and C131. Residue 182–183 (NR) participates in ATP binding.

It belongs to the NifH/BchL/ChlL family. As to quaternary structure, homodimer. Protochlorophyllide reductase is composed of three subunits; BchL, BchN and BchB. The cofactor is [4Fe-4S] cluster.

It carries out the reaction chlorophyllide a + oxidized 2[4Fe-4S]-[ferredoxin] + 2 ADP + 2 phosphate = protochlorophyllide a + reduced 2[4Fe-4S]-[ferredoxin] + 2 ATP + 2 H2O. The protein operates within porphyrin-containing compound metabolism; bacteriochlorophyll biosynthesis (light-independent). Functionally, component of the dark-operative protochlorophyllide reductase (DPOR) that uses Mg-ATP and reduced ferredoxin to reduce ring D of protochlorophyllide (Pchlide) to form chlorophyllide a (Chlide). This reaction is light-independent. The L component serves as a unique electron donor to the NB-component of the complex, and binds Mg-ATP. This chain is Light-independent protochlorophyllide reductase iron-sulfur ATP-binding protein, found in Chlorobium chlorochromatii (strain CaD3).